The primary structure comprises 616 residues: MAPIDPHSFTDSSHPLTTHVALSLYLDFNTSIIHGSALLTLSSAFSGELSLDTRCISIAMVLDPLTLEPIPYSVSTTPDRIRGTEVVVVLSGQSSLLIVYSTSPSASALQWLSPLQTFSKLHPYVYTQCQAIHARSIFPCQDTPAARIRYDVVMNIPNSLSAVMSARHVRRRLAVPEEAKHLEAGSLGSSLWCGEDRVVEEFAMEQPIPPYLFAFAVGELGFREVGPRTRVYTESAAIEVLDAAALEFAGTEDMIKQGEKLFGDYEWERFDLLVLPPSFPYGGMENPRMVFLTPTVIKGDATGAQVVAHELAHSWTGNLITNINNEHFWLNEGFTTYAERRIVEVVQGADIATLNIGIGWRGLTDEMERFKDNLECTKLWNKQEGVDPDDVYSQVPYEKGFQFVLRIERQIGRTAFDEFLKKYIATFKFKSIDTNTFLEFLKANIPGIEKEINLQLWTEGVGIPEDAYEPVSTIYTKIISLAKEFKEGKMPSEDDVAEWNGQEWELYLENLPKSCEPSQVMALDKRYRLAESKDYEVKVSFLQLAVTSKCREYHGEVKKTLKEVGRMKYLRPLFTALAQSGGTEEKQLAKQVFAEARETYHPIAQGVVESILSKYI.

Substrate-binding positions include 128 to 130 and 282 to 286; these read QCQ and GGMEN. A Zn(2+)-binding site is contributed by His-309. Glu-310 acts as the Proton acceptor in catalysis. Zn(2+)-binding residues include His-313 and Glu-332. The active-site Proton donor is Tyr-397. 566 to 568 contacts substrate; it reads RMK.

Belongs to the peptidase M1 family. It depends on Zn(2+) as a cofactor.

The protein localises to the cytoplasm. The enzyme catalyses an epoxide + H2O = an ethanediol. Functionally, aminopeptidase that preferentially cleaves di- and tripeptides. Also has low epoxide hydrolase activity (in vitro). Can hydrolyze the epoxide leukotriene LTA(4) but it forms preferentially 5,6-dihydroxy-7,9,11,14-eicosatetraenoic acid rather than the cytokine leukotriene B(4) as the product compared to the homologous mammalian enzyme (in vitro). The chain is Leucine aminopeptidase (LKHA4) from Arabidopsis thaliana (Mouse-ear cress).